We begin with the raw amino-acid sequence, 415 residues long: MSVQAPSVPDLRQQVHDAARRARGAARALASLSTETKNRALCTAADHVLMNTRTILDANTADLDAARAAGTPEAMLDRLALNPARVEGIADGLRQVAGLPDPIGEVIRGRTLPNGLQLRQQRVPLGVVGIVYEGRPNVTVDAFGLTLKSGNAVLLRGSSSAARSNAALVNALRAALATEGLDTDAVQLLPSEDRASVTHLIQARGLVDVVIPRGGAGLIDAVVRDAQVPTIETGVGNCHVFVHESADLDMAEEIVLNAKTRRPSVCNAAESLLIDAAIADVAVPRLTGALTAAGVTVHADPSEDELRAEFLSMDIALAIVDGVDGAISHINEYGTGHTEAIVTTDLAAAQRFSERVDAAAVMVNASTAFTDGEQFGFGAEIGISTQKLHARGPMGLPELTSTKWIVWGDGHTRPA.

Belongs to the gamma-glutamyl phosphate reductase family.

The protein localises to the cytoplasm. The catalysed reaction is L-glutamate 5-semialdehyde + phosphate + NADP(+) = L-glutamyl 5-phosphate + NADPH + H(+). It participates in amino-acid biosynthesis; L-proline biosynthesis; L-glutamate 5-semialdehyde from L-glutamate: step 2/2. Its function is as follows. Catalyzes the NADPH-dependent reduction of L-glutamate 5-phosphate into L-glutamate 5-semialdehyde and phosphate. The product spontaneously undergoes cyclization to form 1-pyrroline-5-carboxylate. The polypeptide is Gamma-glutamyl phosphate reductase (Mycolicibacterium vanbaalenii (strain DSM 7251 / JCM 13017 / BCRC 16820 / KCTC 9966 / NRRL B-24157 / PYR-1) (Mycobacterium vanbaalenii)).